The sequence spans 131 residues: MRHRHGLRKLNRTSSHRLAMLRNMSNSLFQHELIKTTLPKAKELRKVVEPLITLAKKDTVANRRLAFARLRDRDMVTKLFTELGPRYATRPGGYTRILKFGFRQGDNAPMALVELVDRPEITEAPAEEAAE.

It belongs to the bacterial ribosomal protein bL17 family. Part of the 50S ribosomal subunit. Contacts protein L32.

The chain is Large ribosomal subunit protein bL17 from Cupriavidus metallidurans (strain ATCC 43123 / DSM 2839 / NBRC 102507 / CH34) (Ralstonia metallidurans).